Consider the following 120-residue polypeptide: NADH-ubiquinone oxidoreductase chain 3 (120 aa).

The next 3 membrane-spanning stretches (helical) occupy residues 8–28, 63–83, and 90–110; these read YFIL…ISLL, FYLV…LFPW, and ISYF…IGFI.

This sequence belongs to the complex I subunit 3 family.

The protein resides in the mitochondrion membrane. The enzyme catalyses a ubiquinone + NADH + 5 H(+)(in) = a ubiquinol + NAD(+) + 4 H(+)(out). In terms of biological role, core subunit of the mitochondrial membrane respiratory chain NADH dehydrogenase (Complex I) that is believed to belong to the minimal assembly required for catalysis. Complex I functions in the transfer of electrons from NADH to the respiratory chain. The immediate electron acceptor for the enzyme is believed to be ubiquinone. The protein is NADH-ubiquinone oxidoreductase chain 3 (ND3) of Cyanidium caldarium (Red alga).